A 252-amino-acid polypeptide reads, in one-letter code: Type III pantothenate kinase (252 aa).

Residue 6–13 coordinates ATP; it reads DMGNTRLK. Substrate is bound by residues Tyr93 and 100–103; that span reads GVDR. Residue Asp102 is the Proton acceptor of the active site. Thr126 is a binding site for ATP. A substrate-binding site is contributed by Thr179.

This sequence belongs to the type III pantothenate kinase family. Homodimer. NH4(+) is required as a cofactor. It depends on K(+) as a cofactor.

It is found in the cytoplasm. It catalyses the reaction (R)-pantothenate + ATP = (R)-4'-phosphopantothenate + ADP + H(+). The protein operates within cofactor biosynthesis; coenzyme A biosynthesis; CoA from (R)-pantothenate: step 1/5. Functionally, catalyzes the phosphorylation of pantothenate (Pan), the first step in CoA biosynthesis. The chain is Type III pantothenate kinase from Cellvibrio japonicus (strain Ueda107) (Pseudomonas fluorescens subsp. cellulosa).